The primary structure comprises 180 residues: Protein sll1483 (180 aa).

Positions 1–26 are cleaved as a signal peptide; that stretch reads MKTAARIVAFTALTGFALGMPTVAMA. One can recognise an FAS1 domain in the interval 45-176; it reads AMTIVEVAAG…GVIHVIDQVI (132 aa).

This is Protein sll1483 from Synechocystis sp. (strain ATCC 27184 / PCC 6803 / Kazusa).